The following is a 287-amino-acid chain: uncharacterized protein (287 aa).

This is an uncharacterized protein from Methanocaldococcus jannaschii (strain ATCC 43067 / DSM 2661 / JAL-1 / JCM 10045 / NBRC 100440) (Methanococcus jannaschii).